The following is a 418-amino-acid chain: MKAEIIAVGTEILTGQIVNTNAQFLSEKLAEIGVDVYFQTAVGDNEVRLLSLLEIASQRSSLVILTGGLGPTEDDLTKQTLAKFLGKALVFDPQAQEKLDIFFALRPDYARTPNNERQAQIVEGAIPLPNETGLAVGGKLEVDGVTYVVLPGPPSELKPMVLNQLLPKLMTGSKLYSRVLRFFGIGESQLVTILADLIDNQIDPTLAPYAKTGEVTLRLSTKASSQEEANQALDILENQILDCQTFEGISLRDFCYGYGEETSLASIVVEELKRQGKTIAAAESLTAGLFQATVANFSGASSIFKGGFVTYSLEEKSRMLDIPAKNLEEHGVVSEFTAQKMAEQARSKTQSDFGISLTGVAGPDSLEGHPVGTVFIGLAQEQGTEVIKVNIGGRSRADVRHIAVMHAFNLVRKALLSD.

It belongs to the CinA family.

In Streptococcus pneumoniae (strain 70585), this protein is Putative competence-damage inducible protein.